Reading from the N-terminus, the 458-residue chain is Phosphoglucosamine mutase (458 aa).

Serine 106 serves as the catalytic Phosphoserine intermediate. Residues serine 106, aspartate 247, aspartate 249, and aspartate 251 each contribute to the Mg(2+) site. Serine 106 is subject to Phosphoserine.

The protein belongs to the phosphohexose mutase family. The cofactor is Mg(2+). In terms of processing, activated by phosphorylation.

The enzyme catalyses alpha-D-glucosamine 1-phosphate = D-glucosamine 6-phosphate. Catalyzes the conversion of glucosamine-6-phosphate to glucosamine-1-phosphate. The protein is Phosphoglucosamine mutase of Chlamydia trachomatis serovar A (strain ATCC VR-571B / DSM 19440 / HAR-13).